A 75-amino-acid chain; its full sequence is Small ribosomal subunit protein bS18c (75 aa).

The protein belongs to the bacterial ribosomal protein bS18 family. As to quaternary structure, part of the 30S ribosomal subunit.

The protein localises to the plastid. It is found in the chloroplast. The chain is Small ribosomal subunit protein bS18c from Angiopteris evecta (Mule's foot fern).